The primary structure comprises 419 residues: POU domain, class 4, transcription factor 1 (419 aa).

A POU-IV box motif is present at residues 57–66 (RAEALAAVDI). Disordered stretches follow at residues 94-117 (STVP…GDLL) and 131-197 (AGGA…HSLG). Basic residues predominate over residues 99–108 (AHHHHHHHHH). Over residues 131–184 (AGGAGAAAGGGGAHDGPGGGGGPGGGGGPGGGPGGGGGGGPGGGGGGPGGGLLG) the composition is skewed to gly residues. One can recognise a POU-specific domain in the interval 261–338 (SDTDPRELEA…LQAWLEEAEG (78 aa)). The segment at residues 356–415 (KRKRTSIAAPEKRSLEAYFAVQPRPSSEKIAAIAEKLDLKKNVVRVWFCNQRQKQKRMKF) is a DNA-binding region (homeobox).

It belongs to the POU transcription factor family. Class-4 subfamily. In terms of assembly, interacts (via N-terminus) with RIT2; the interaction controls POU4F1 transactivation activity on some neuronal target genes. Isoform 1 interacts with POU4F2; this interaction inhibits both POU4F1 DNA-binding and transcriptional activities. Isoform 1 interacts (C-terminus) with ESR1 (via DNA-binding domain); this interaction decreases the estrogen receptor ESR1 transcriptional activity in a DNA- and ligand 17-beta-estradiol-independent manner. In terms of tissue distribution, expressed in the brain and the retina. Present in the developing brain, spinal cord and eye.

Its subcellular location is the nucleus. It is found in the cytoplasm. Its function is as follows. Multifunctional transcription factor with different regions mediating its different effects. Acts by binding (via its C-terminal domain) to sequences related to the consensus octamer motif 5'-ATGCAAAT-3' in the regulatory regions of its target genes. Regulates the expression of specific genes involved in differentiation and survival within a subset of neuronal lineages. It has been shown that activation of some of these genes requires its N-terminal domain, maybe through a neuronal-specific cofactor. Activates BCL2 expression and protects neuronal cells from apoptosis (via the N-terminal domain). Induces neuronal process outgrowth and the coordinate expression of genes encoding synaptic proteins. Exerts its major developmental effects in somatosensory neurons and in brainstem nuclei involved in motor control. Stimulates the binding affinity of the nuclear estrogene receptor ESR1 to DNA estrogen response element (ERE), and hence modulates ESR1-induced transcriptional activity. May positively regulate POU4F2 and POU4F3. Regulates dorsal root ganglion sensory neuron specification and axonal projection into the spinal cord. Plays a role in TNFSF11-mediated terminal osteoclast differentiation. Negatively regulates its own expression interacting directly with a highly conserved autoregulatory domain surrounding the transcription initiation site. Able to act as transcription factor, cannot regulate the expression of the same subset of genes than isoform 1. Does not have antiapoptotic effect on neuronal cells. The protein is POU domain, class 4, transcription factor 1 of Homo sapiens (Human).